The sequence spans 596 residues: Transcription factor COE3 (596 aa).

The interval 1-22 (MFGIQENIPRGGTTMKEEPLGS) is disordered. Residues 63–66 (RKSN) are interaction with DNA. Residues 151–170 (CRVLLTHEIMCSRCCDKKSC) form a C5-type zinc finger. Interaction with DNA regions lie at residues 197 to 204 (NCLKNAGN) and 236 to 239 (NNSK). In terms of domain architecture, IPT/TIG spans 263–346 (PCIKAISPSE…KGAPGRFVYT (84 aa)). Residues 451 to 483 (TSQANDQVGYSRNTSSVSPRGYVPSSTPQQSNY) are disordered.

It belongs to the COE family. Forms either a homodimer or a heterodimer with a related family member. Expressed in brain.

Its subcellular location is the nucleus. In terms of biological role, transcriptional activator. Recognizes variations of the palindromic sequence 5'-ATTCCCNNGGGAATT-3'. The protein is Transcription factor COE3 (EBF3) of Homo sapiens (Human).